Reading from the N-terminus, the 234-residue chain is Carboxymethylenebutenolidase 1 (234 aa).

Residues cysteine 123, aspartate 171, and histidine 201 contribute to the active site.

This sequence belongs to the dienelactone hydrolase family. Monomer.

The enzyme catalyses 2-(5-oxo-2,5-dihydrofuran-2-ylidene)acetate + H2O = 4-oxohex-2-enedioate + H(+). The protein operates within aromatic compound metabolism; 3-chlorocatechol degradation. Its function is as follows. Ring cleavage of cyclic ester dienelactone to produce maleylacetate. This is Carboxymethylenebutenolidase 1 (tfdEI) from Cupriavidus pinatubonensis (strain JMP 134 / LMG 1197) (Cupriavidus necator (strain JMP 134)).